The chain runs to 311 residues: Urease accessory protein UreD (311 aa).

The protein belongs to the UreD family. UreD, UreF and UreG form a complex that acts as a GTP-hydrolysis-dependent molecular chaperone, activating the urease apoprotein by helping to assemble the nickel containing metallocenter of UreC. The UreE protein probably delivers the nickel.

The protein resides in the cytoplasm. In terms of biological role, required for maturation of urease via the functional incorporation of the urease nickel metallocenter. The polypeptide is Urease accessory protein UreD (Synechococcus sp. (strain CC9605)).